A 270-amino-acid polypeptide reads, in one-letter code: Small ribosomal subunit protein uS2 (270 aa).

The protein belongs to the universal ribosomal protein uS2 family. In terms of assembly, component of the small ribosomal subunit. Mature ribosomes consist of a small (40S) and a large (60S) subunit. The 40S subunit contains about 33 different proteins and 1 molecule of RNA (18S). The 60S subunit contains about 49 different proteins and 3 molecules of RNA (28S, 5.8S and 5S). Interacts with oho23B/rpS21.

It localises to the cytoplasm. Its subcellular location is the nucleus. Functionally, required for the assembly and/or stability of the 40S ribosomal subunit. Required for the processing of the 20S rRNA-precursor to mature 18S rRNA in a late step of the maturation of 40S ribosomal subunits. Required during oogenesis and imaginal development. The sequence is that of Small ribosomal subunit protein uS2 from Drosophila persimilis (Fruit fly).